The sequence spans 166 residues: Disulfide bond reductase DsbH (166 aa).

An N-terminal signal peptide occupies residues 1–22 (MKFWLQGCAFVGCLLLTLPCCA). Residues 32 to 166 (LQQTRPIAAA…SKVKSALKLR (135 aa)) enclose the Thioredoxin domain. Cys-72 and Cys-75 form a disulfide bridge. 73-74 (MW) contacts substrate.

Monomer.

The protein localises to the periplasm. Its function is as follows. Catalyzes the reduction of disulfide bonds. May function in reducing intermolecular disulfides between proteins and small molecules in the periplasm, or keeping a specific subset of periplasmic proteins reduced, or maintaining the periplasm of Chlamydia in a generally reducing state. Seems to be unable to oxidize thiols into disulfides and does not display disulfide bond isomerase activity. This is Disulfide bond reductase DsbH (dsbH) from Chlamydia pneumoniae (Chlamydophila pneumoniae).